The chain runs to 213 residues: MSRVLVPCHVKGSVALQVGDVRTSQGRPGVLVIDVTFPSVAPFELQEITFKNYYTAFLSIRVRQYTSAHTPAKWVTCLRDYCLMPDPHSEEGAQEYVSLFKHQMLCDMARISELRLILRQPSPLWLSFTVEELQIYQQGPKSPSVTFPKWLSHPVPCEQPALLREGLPDPSRVSSEVQQMWALTEMIRASHTSARIGRFDVDGCYDLNLLSYT.

Part of the neuronal tubulin polyglutamylase complex which contains TPGS1, TPGS2, TTLL1, LRRC49 and NICN1. In terms of tissue distribution, high expression level is found in brain, testis, liver and kidney. Weak expression in spleen, leukocytes, small intestine and colon.

It is found in the nucleus. The chain is Nicolin-1 (NICN1) from Homo sapiens (Human).